A 504-amino-acid chain; its full sequence is Galactan beta-1,4-galactosyltransferase GALS3 (504 aa).

The chain crosses the membrane as a helical span at residues 30–50 (LTFMALLVLCTLATLLPFIPS). Positions 242-456 (DYLYCGSSLY…YHGSISQRRE (215 aa)) constitute a GT92 domain.

Belongs to the glycosyltransferase 92 family. As to expression, expressed in root caps, mature leaves, top of the stems and seeds.

The protein resides in the golgi apparatus membrane. In terms of biological role, involved in the biosynthesis of beta-1,4-galactan. Beta-1,4-galactans are abundant polysaccharides in plant cell walls and are found as side-chain of rhamnogalacturonan I, which is a major component of pectin. The sequence is that of Galactan beta-1,4-galactosyltransferase GALS3 from Arabidopsis thaliana (Mouse-ear cress).